Here is a 310-residue protein sequence, read N- to C-terminus: Hydroxyacylglutathione hydrolase, mitochondrial (310 aa).

Zn(2+)-binding residues include histidine 104, histidine 106, aspartate 108, histidine 109, histidine 160, and aspartate 184. Residues 193 to 195 (KFF), 223 to 225 (HEY), and 299 to 302 (RKEK) each bind substrate. Residue histidine 223 participates in Zn(2+) binding.

It belongs to the metallo-beta-lactamase superfamily. Glyoxalase II family. Monomer. It depends on Zn(2+) as a cofactor.

The protein resides in the mitochondrion matrix. The protein localises to the cytoplasm. The enzyme catalyses an S-(2-hydroxyacyl)glutathione + H2O = a 2-hydroxy carboxylate + glutathione + H(+). It catalyses the reaction (R)-S-lactoylglutathione + H2O = (R)-lactate + glutathione + H(+). Functionally, thiolesterase that catalyzes the hydrolysis of S-D-lactoyl-glutathione to form glutathione and D-lactic acid. The polypeptide is Hydroxyacylglutathione hydrolase, mitochondrial (HAGH) (Gallus gallus (Chicken)).